We begin with the raw amino-acid sequence, 214 residues long: MATKEELIQELSDSIISCKKDAVLAAVEKAKQVMEPAEIIENGLAAGMNQVGVLFERGKLFLPHVMMAADAMTAGVKVLEADMPAGAATKKLGVIVNGTVEGDVHDIGKSIVSTMLQSAGFEVHDIGRDVPIKNFVEKAKEVNANMIGISALMTTTLQGQREVIELLKEEGLRSRVKVMVGGAPATQAWADKIGADCYAENASEAVAKAKELLL.

The region spanning 1 to 91 (MATKEELIQE…DMPAGAATKK (91 aa)) is the B12-binding N-terminal domain. The 123-residue stretch at 92 to 214 (LGVIVNGTVE…AVAKAKELLL (123 aa)) folds into the B12-binding domain. His105 lines the methylcob(III)alamin pocket.

This sequence belongs to the methylamine corrinoid protein family.

The protein operates within one-carbon metabolism; methanogenesis from dimethylamine. Acts as a methyl group carrier between MtbB and MtbA. This is Dimethylamine corrinoid protein 2 (mtbC2) from Methanosarcina mazei (strain ATCC BAA-159 / DSM 3647 / Goe1 / Go1 / JCM 11833 / OCM 88) (Methanosarcina frisia).